Here is an 81-residue protein sequence, read N- to C-terminus: CLAVATA3/ESR (CLE)-related protein 12 (81 aa).

The first 31 residues, Met-1–Arg-31, serve as a signal peptide directing secretion. The segment covering Lys-55–Pro-67 has biased composition (basic and acidic residues). A disordered region spans residues Lys-55–Asn-81. Hydroxyproline occurs at positions 73 and 76. Pro-76 carries O-linked (Ara...) hydroxyproline glycosylation.

It belongs to the CLV3/ESR signal peptide family. The O-glycosylation (arabinosylation) of the hydroxyproline Pro-76 enhances binding affinity of the CLE12p peptide for its receptor. Expressed in young nodules throughout the central tissue. Expressed in the apical region of elongated nodules, corresponding to the meristematic and early infection zones.

The protein resides in the secreted. The protein localises to the extracellular space. Signaling peptide involved in the regulation of nodulation. Moves from root to shoot to function with the receptor kinase SUNN, in a signaling pathway that plays roles during cellular differentiation, both at the onset of nodulation, and later during nodule meristem development and subsequent homeostasis. Interacts with SUNN signaling to control nodule numbers. SUNN is involved in the autoregulation of nodulation (AON), a long distance systemic signaling from root to shoot and back again, which allows legumes to limit the number of root nodules formed based on available nitrogen and previous rhizobial colonization. This is CLAVATA3/ESR (CLE)-related protein 12 from Medicago truncatula (Barrel medic).